The following is a 354-amino-acid chain: Caffeate O-methyltransferase-like protein 2 (354 aa).

S-adenosyl-L-homocysteine-binding residues include G198, D221, M242, and K255. The Proton acceptor role is filled by H259. Residues E287 and E319 contribute to the active site.

Belongs to the class I-like SAM-binding methyltransferase superfamily. Cation-independent O-methyltransferase family. COMT subfamily.

The chain is Caffeate O-methyltransferase-like protein 2 from Oryza sativa subsp. japonica (Rice).